The following is a 321-amino-acid chain: Torsin-2A (321 aa).

The signal sequence occupies residues 1–26 (MAVARHGYRPWGSILGLLGLALAAAA). ATP is bound at residue 93–100 (GWTGTGKS). N-linked (GlcNAc...) asparagine glycosylation is present at Asn149.

The protein belongs to the ClpA/ClpB family. Torsin subfamily. In terms of assembly, homohexamer. Interacts with TOR1AIP1. In terms of processing, N-glycosylated. Expressed at similar levels in liver, muscle and brain (at protein level).

The protein resides in the endoplasmic reticulum lumen. This is Torsin-2A (Tor2a) from Mus musculus (Mouse).